The chain runs to 322 residues: Phosphatidylglycerol--prolipoprotein diacylglyceryl transferase (322 aa).

4 consecutive transmembrane segments (helical) span residues 21–41, 50–70, 98–118, and 123–143; these read PLPIRAYAMCIIAGIIVAIWL, GGNPEVVLDAAIVAVPAGIIG, NGGLGIWGAVILGGLAVWAYF, and IPLAPFADAVAPGVILAQAIG. Arg144 contacts a 1,2-diacyl-sn-glycero-3-phospho-(1'-sn-glycerol). The next 2 membrane-spanning stretches (helical) occupy residues 191–211 and 254–274; these read VHPTFLYEMLWNLLIFGLLIW and INTLVSAVVFILAVIVFLRLG. The interval 283–322 is disordered; it reads VDPAYHAAQAERDDTETAGLDATTGTVPGDSPETTGKKRK.

This sequence belongs to the Lgt family.

Its subcellular location is the cell membrane. The enzyme catalyses L-cysteinyl-[prolipoprotein] + a 1,2-diacyl-sn-glycero-3-phospho-(1'-sn-glycerol) = an S-1,2-diacyl-sn-glyceryl-L-cysteinyl-[prolipoprotein] + sn-glycerol 1-phosphate + H(+). It participates in protein modification; lipoprotein biosynthesis (diacylglyceryl transfer). In terms of biological role, catalyzes the transfer of the diacylglyceryl group from phosphatidylglycerol to the sulfhydryl group of the N-terminal cysteine of a prolipoprotein, the first step in the formation of mature lipoproteins. In Corynebacterium efficiens (strain DSM 44549 / YS-314 / AJ 12310 / JCM 11189 / NBRC 100395), this protein is Phosphatidylglycerol--prolipoprotein diacylglyceryl transferase.